A 176-amino-acid polypeptide reads, in one-letter code: Peptide deformylase 1 (176 aa).

Residues C99 and H141 each contribute to the Fe cation site. E142 is an active-site residue. H145 contacts Fe cation.

This sequence belongs to the polypeptide deformylase family. It depends on Fe(2+) as a cofactor.

It catalyses the reaction N-terminal N-formyl-L-methionyl-[peptide] + H2O = N-terminal L-methionyl-[peptide] + formate. In terms of biological role, removes the formyl group from the N-terminal Met of newly synthesized proteins. Requires at least a dipeptide for an efficient rate of reaction. N-terminal L-methionine is a prerequisite for activity but the enzyme has broad specificity at other positions. The polypeptide is Peptide deformylase 1 (Nitrosomonas europaea (strain ATCC 19718 / CIP 103999 / KCTC 2705 / NBRC 14298)).